A 208-amino-acid polypeptide reads, in one-letter code: Small ribosomal subunit protein eS8 (208 aa).

Belongs to the eukaryotic ribosomal protein eS8 family. As to quaternary structure, component of the small ribosomal subunit. Identified in a IGF2BP1-dependent mRNP granule complex containing untranslated mRNAs. Part of the small subunit (SSU) processome, composed of more than 70 proteins and the RNA chaperone small nucleolar RNA (snoRNA) U3.

The protein resides in the cytoplasm. It is found in the membrane. Its subcellular location is the nucleus. It localises to the nucleolus. In terms of biological role, component of the small ribosomal subunit. The ribosome is a large ribonucleoprotein complex responsible for the synthesis of proteins in the cell. Part of the small subunit (SSU) processome, first precursor of the small eukaryotic ribosomal subunit. During the assembly of the SSU processome in the nucleolus, many ribosome biogenesis factors, an RNA chaperone and ribosomal proteins associate with the nascent pre-rRNA and work in concert to generate RNA folding, modifications, rearrangements and cleavage as well as targeted degradation of pre-ribosomal RNA by the RNA exosome. This chain is Small ribosomal subunit protein eS8 (rps-8), found in Caenorhabditis elegans.